Reading from the N-terminus, the 360-residue chain is Phenylalanine--tRNA ligase alpha subunit (360 aa).

Glu-260 contacts Mg(2+).

Belongs to the class-II aminoacyl-tRNA synthetase family. Phe-tRNA synthetase alpha subunit type 1 subfamily. As to quaternary structure, tetramer of two alpha and two beta subunits. Mg(2+) is required as a cofactor.

It is found in the cytoplasm. It carries out the reaction tRNA(Phe) + L-phenylalanine + ATP = L-phenylalanyl-tRNA(Phe) + AMP + diphosphate + H(+). This is Phenylalanine--tRNA ligase alpha subunit from Agrobacterium fabrum (strain C58 / ATCC 33970) (Agrobacterium tumefaciens (strain C58)).